A 296-amino-acid chain; its full sequence is Glycine--tRNA ligase alpha subunit (296 aa).

It belongs to the class-II aminoacyl-tRNA synthetase family. As to quaternary structure, tetramer of two alpha and two beta subunits.

The protein localises to the cytoplasm. It catalyses the reaction tRNA(Gly) + glycine + ATP = glycyl-tRNA(Gly) + AMP + diphosphate. This Francisella tularensis subsp. holarctica (strain FTNF002-00 / FTA) protein is Glycine--tRNA ligase alpha subunit.